The sequence spans 420 residues: Deoxyribodipyrimidine photo-lyase (420 aa).

The 123-residue stretch at 2 to 124 (GPLLVWHRGD…PLHLLPAPHL (123 aa)) folds into the Photolyase/cryptochrome alpha/beta domain. Residues 147-176 (APPLPPPEALPKGPEEGEIPREDPGLPLPE) form a disordered region. The segment covering 159–170 (GPEEGEIPREDP) has biased composition (basic and acidic residues). Y197 lines the FAD pocket. R201 is a binding site for DNA. Residues 209–213 (GSRLS), W241, R248, N310, and 341–343 (DGD) contribute to the FAD site. Interaction with DNA regions lie at residues 244–251 (ELLWRDFS) and 310–311 (NR). Q373 contacts DNA.

This sequence belongs to the DNA photolyase class-1 family. In terms of assembly, monomer. FAD is required as a cofactor.

The enzyme catalyses cyclobutadipyrimidine (in DNA) = 2 pyrimidine residues (in DNA).. In terms of biological role, involved in repair of UV radiation-induced DNA damage. Catalyzes the light-dependent monomerization (300-600 nm) of cyclobutyl pyrimidine dimers (in cis-syn configuration), which are formed between adjacent bases on the same DNA strand upon exposure to ultraviolet radiation. This is Deoxyribodipyrimidine photo-lyase (phr) from Thermus thermophilus (strain ATCC 27634 / DSM 579 / HB8).